We begin with the raw amino-acid sequence, 225 residues long: Transcriptional activator protein BglJ (225 aa).

The region spanning 146 to 211 (YINQSRTLSP…GLLEAADILL (66 aa)) is the HTH luxR-type domain. The segment at residues 170–189 (MTQIAEQLKRNIKTIRAHKF) is a DNA-binding region (H-T-H motif).

As to quaternary structure, forms a complex with RcsB; genetically both BglJ and RcsB are required to relieve bgl operon repression by H-NS and by StpA.

In terms of biological role, a crytic transcriptional activator. When its expression is induced it relieves H-NS repression of the bgl operon. Acts independently of transcription factor LeuO. The chain is Transcriptional activator protein BglJ (bglJ) from Escherichia coli (strain K12).